We begin with the raw amino-acid sequence, 378 residues long: Sphingosine 1-phosphate receptor 3 (378 aa).

Residues 1–40 (MATALPPRLQPVRGNETLREHYQYVGKLAGRLKEASEGST) are Extracellular-facing. Residue N15 is glycosylated (N-linked (GlcNAc...) asparagine). The chain crosses the membrane as a helical span at residues 41-65 (LTTVLFLVICSFIVLENLMVLIAIW). At 66–72 (KNNKFHN) the chain is on the cytoplasmic side. The chain crosses the membrane as a helical span at residues 73-101 (RMYFFIGNLALCDLLAGIAYKVNILMSGK). The Extracellular segment spans residues 102–115 (KTFSLSPTVWFLRE). A helical transmembrane segment spans residues 116 to 134 (GSMFVALGASTCSLLAIAI). At 135–153 (ERHLTMIKMRPYDANKRHR) the chain is on the cytoplasmic side. The chain crosses the membrane as a helical span at residues 154-179 (VFLLIGMCWLIAFTLGALPILGWNCL). Residues 180 to 195 (HNLPDCSTILPLYSKK) lie on the Extracellular side of the membrane. A helical transmembrane segment spans residues 196–216 (YIAFCISIFTAILVTIVILYA). Residues 217 to 243 (RIYFLVKSSSRKVANHNNSERSMALLR) lie on the Cytoplasmic side of the membrane. The helical transmembrane segment at 244 to 265 (TVVIVVSVFIACWSPLFILFLI) threads the bilayer. Residues 266-281 (DVACRVQACPILFKAQ) are Extracellular-facing. The chain crosses the membrane as a helical span at residues 282-302 (WFIVLAVLNSAMNPVIYTLAS). Over 303–378 (KEMRRAFFRL…AALQNGIFCN (76 aa)) the chain is Cytoplasmic. S326 carries the post-translational modification Phosphoserine. Residues 327–357 (PIQPALDPSRSKSSSSNNSSHSPKVKEDLPH) are disordered. Low complexity predominate over residues 337-348 (SKSSSSNNSSHS).

The protein belongs to the G-protein coupled receptor 1 family. Expressed in all tissues, but most abundantly in heart, placenta, kidney, and liver.

The protein resides in the cell membrane. Its function is as follows. Receptor for the lysosphingolipid sphingosine 1-phosphate (S1P). S1P is a bioactive lysophospholipid that elicits diverse physiological effect on most types of cells and tissues. When expressed in rat HTC4 hepatoma cells, is capable of mediating S1P-induced cell proliferation and suppression of apoptosis. The protein is Sphingosine 1-phosphate receptor 3 of Homo sapiens (Human).